The sequence spans 736 residues: Centrosomal protein kizuna (736 aa).

The stretch at 10–35 (HRAMKLQRNLRHCEGKRLELERELFQ) forms a coiled coil. A compositionally biased stretch (polar residues) spans 192–208 (NTSFQLSQKMPVTSVAS). Disordered regions lie at residues 192 to 238 (NTSF…SAQL), 279 to 305 (SFTHANPSGASPDACDYINNQTSDKHS), 323 to 348 (EDKQCLDSSSDLTVSISESEDDSYPP), and 642 to 690 (TVEE…NMST). The segment covering 210 to 219 (EDGRTHRAQI) has biased composition (basic and acidic residues). The segment covering 328 to 339 (LDSSSDLTVSIS) has biased composition (polar residues). The span at 658–668 (SETSFSSSEKS) shows a compositional bias: low complexity. Over residues 678–690 (IQPNYMKSNNMST) the composition is skewed to polar residues.

It belongs to the kizuna family.

The protein resides in the cytoplasm. Its subcellular location is the cytoskeleton. The protein localises to the microtubule organizing center. It is found in the centrosome. It localises to the cilium basal body. In terms of biological role, centrosomal protein required for establishing a robust mitotic centrosome architecture that can endure the forces that converge on the centrosomes during spindle formation. Required for stabilizing the expanded pericentriolar material around the centriole. This Xenopus laevis (African clawed frog) protein is Centrosomal protein kizuna (kiz).